A 180-amino-acid chain; its full sequence is ATP synthase subunit delta (180 aa).

This sequence belongs to the ATPase delta chain family. In terms of assembly, F-type ATPases have 2 components, F(1) - the catalytic core - and F(0) - the membrane proton channel. F(1) has five subunits: alpha(3), beta(3), gamma(1), delta(1), epsilon(1). F(0) has three main subunits: a(1), b(2) and c(10-14). The alpha and beta chains form an alternating ring which encloses part of the gamma chain. F(1) is attached to F(0) by a central stalk formed by the gamma and epsilon chains, while a peripheral stalk is formed by the delta and b chains.

It is found in the cell inner membrane. F(1)F(0) ATP synthase produces ATP from ADP in the presence of a proton or sodium gradient. F-type ATPases consist of two structural domains, F(1) containing the extramembraneous catalytic core and F(0) containing the membrane proton channel, linked together by a central stalk and a peripheral stalk. During catalysis, ATP synthesis in the catalytic domain of F(1) is coupled via a rotary mechanism of the central stalk subunits to proton translocation. Its function is as follows. This protein is part of the stalk that links CF(0) to CF(1). It either transmits conformational changes from CF(0) to CF(1) or is implicated in proton conduction. In Trichlorobacter lovleyi (strain ATCC BAA-1151 / DSM 17278 / SZ) (Geobacter lovleyi), this protein is ATP synthase subunit delta.